The primary structure comprises 403 residues: Phosphoglycerate kinase (403 aa).

Substrate is bound by residues 21-23 (DFN), arginine 36, 59-62 (HLGR), arginine 118, and arginine 151. ATP-binding positions include lysine 202, glutamate 328, and 354-357 (GGDS).

This sequence belongs to the phosphoglycerate kinase family. In terms of assembly, monomer.

It localises to the cytoplasm. It catalyses the reaction (2R)-3-phosphoglycerate + ATP = (2R)-3-phospho-glyceroyl phosphate + ADP. It participates in carbohydrate degradation; glycolysis; pyruvate from D-glyceraldehyde 3-phosphate: step 2/5. The protein is Phosphoglycerate kinase of Akkermansia muciniphila (strain ATCC BAA-835 / DSM 22959 / JCM 33894 / BCRC 81048 / CCUG 64013 / CIP 107961 / Muc).